Reading from the N-terminus, the 102-residue chain is Large ribosomal subunit protein mL63 (102 aa).

This sequence belongs to the mitochondrion-specific ribosomal protein mL63 family.

Its subcellular location is the mitochondrion. The polypeptide is Large ribosomal subunit protein mL63 (MRPL57) (Bos taurus (Bovine)).